A 249-amino-acid chain; its full sequence is MGADVEQDDTEQYLKQGTLAVLGVLRELLQNQTPMRVSHPRGQFITRLLHVDKTNMVIDFGSNDYDNQLAQEANELHIVADTRGARIELILTSLQMSEYEGLPAFTAALPGQLKMIQRREFFRVDAPLNPIFFCYVPWPDGTGEGRLRLQDLSIGGIGMLSEGTVPDALSCGDTIKKLRLEMGEYGRFVVDAQLISIGKHSVVGSKCETVVTPRLSLRFLSLNAAQERELQQVIFSLERLARDKAKRFQ.

The PilZ domain occupies 117 to 236 (QRREFFRVDA…ERELQQVIFS (120 aa)).

Belongs to the YcgR family. In terms of assembly, monomer. Interacts with the flagellar basal bodies.

It is found in the bacterial flagellum basal body. Its function is as follows. Acts as a flagellar brake, regulating swimming and swarming in a bis-(3'-5') cyclic diguanylic acid (c-di-GMP)-dependent manner. Binds 1 c-di-GMP dimer per subunit. Increasing levels of c-di-GMP lead to decreased motility. This chain is Flagellar brake protein YcgR, found in Erwinia tasmaniensis (strain DSM 17950 / CFBP 7177 / CIP 109463 / NCPPB 4357 / Et1/99).